The chain runs to 70 residues: Toxin Boma6d (70 aa).

The 67-residue stretch at 2–68 (RDAYIAQNYN…VPIKVEGKCH (67 aa)) folds into the LCN-type CS-alpha/beta domain. Cystine bridges form between C12/C67, C16/C40, C22/C50, and C26/C52.

It belongs to the long (4 C-C) scorpion toxin superfamily. Sodium channel inhibitor family. Alpha subfamily. As to expression, expressed by the venom gland.

The protein localises to the secreted. In terms of biological role, alpha toxins bind voltage-independently at site-3 of sodium channels (Nav) and inhibit the inactivation of the activated channels, thereby blocking neuronal transmission. In Buthus occitanus mardochei (Moroccan scorpion), this protein is Toxin Boma6d.